The following is a 434-amino-acid chain: Glutamyl-tRNA reductase (434 aa).

Substrate is bound by residues 49 to 52, Ser-107, 112 to 114, and Gln-118; these read TCNR and EPQ. The active-site Nucleophile is the Cys-50. Residue 187–192 participates in NADP(+) binding; sequence GAGETV.

It belongs to the glutamyl-tRNA reductase family. As to quaternary structure, homodimer.

The catalysed reaction is (S)-4-amino-5-oxopentanoate + tRNA(Glu) + NADP(+) = L-glutamyl-tRNA(Glu) + NADPH + H(+). It functions in the pathway porphyrin-containing compound metabolism; protoporphyrin-IX biosynthesis; 5-aminolevulinate from L-glutamyl-tRNA(Glu): step 1/2. Functionally, catalyzes the NADPH-dependent reduction of glutamyl-tRNA(Glu) to glutamate 1-semialdehyde (GSA). This Hydrogenovibrio crunogenus (strain DSM 25203 / XCL-2) (Thiomicrospira crunogena) protein is Glutamyl-tRNA reductase.